A 721-amino-acid polypeptide reads, in one-letter code: Xylosyl- and glucuronyltransferase LARGE2 (721 aa).

The Cytoplasmic portion of the chain corresponds to 1–8; the sequence is MLPRGRPR. Residues 9–29 traverse the membrane as a helical; Signal-anchor for type II membrane protein segment; it reads ALGAAALLLLLLLLGFLLFGG. The Lumenal portion of the chain corresponds to 30 to 721; that stretch reads DLGCERREPG…LQQPQSPARG (692 aa). Residues 59 to 89 form a disordered region; that stretch reads DGRLRRAAALDGDPGAGPGDHNRSDCGPQPP. 2 N-linked (GlcNAc...) asparagine glycosylation sites follow: Asn-80 and Asn-107. Positions 97–372 are xylosyltransferase activity; it reads LHVAIVCAGH…FLEYDGNLLR (276 aa). Residues Asp-201 and Asp-203 each contribute to the Mn(2+) site. Asn-231 is a glycosylation site (N-linked (GlcNAc...) asparagine). The interval 373 to 715 is glucuronyltransferase activity; the sequence is RELFVCPSQP…LKYLPALQQP (343 aa). Residues Asp-521 and Asp-523 each coordinate Mn(2+).

It in the C-terminal section; belongs to the glycosyltransferase 49 family. This sequence in the N-terminal section; belongs to the glycosyltransferase 8 family. Interacts with B4GAT1. The cofactor is Mn(2+). Widely expressed. Expressed at high level in placenta, pancreas and kidney compared to LARGE. Not expressed in brain.

Its subcellular location is the golgi apparatus membrane. The enzyme catalyses 3-O-[beta-D-GlcA-(1-&gt;3)-beta-D-Xyl-(1-&gt;4)-Rib-ol-P-Rib-ol-P-3-beta-D-GalNAc-(1-&gt;3)-beta-D-GlcNAc-(1-&gt;4)-(O-6-P-alpha-D-Man)]-Thr-[protein] + UDP-alpha-D-xylose = 3-O-[alpha-D-Xyl-(1-&gt;3)-beta-D-GlcA-(1-&gt;4)-beta-D-Xyl-(1-&gt;4)-Rib-ol-P-Rib-ol-P-3-beta-D-GalNAc-(1-&gt;3)-beta-D-GlcNAc-(1-&gt;4)-(O-6-P-alpha-D-Man)]-Thr-[protein] + UDP + H(+). The catalysed reaction is 3-O-{(1-&gt;[3)-alpha-D-Xyl-(1-&gt;3)-beta-D-GlcA-(1-&gt;](n)-4)-beta-D-Xyl-(1-&gt;4)-Rib-ol-P-Rib-ol-P-3-beta-D-GalNAc-(1-&gt;3)-beta-D-GlcNAc-(1-&gt;4)-O-6-P-alpha-D-Man}-L-Thr-[protein] + UDP-alpha-D-glucuronate = 3-O-{beta-D-GlcA-(1-&gt;[3)-alpha-D-Xyl-(1-&gt;3)-beta-D-GlcA-(1-&gt;](n)-4)-beta-D-Xyl-(1-&gt;4)-Rib-ol-P-Rib-ol-P-3-beta-D-GalNAc-(1-&gt;3)-beta-D-GlcNAc-(1-&gt;4)-O-6-P-alpha-D-Man}-L-Thr-[protein] + UDP + H(+). It carries out the reaction 3-O-{beta-D-GlcA-(1-&gt;[3)-alpha-D-Xyl-(1-&gt;3)-beta-D-GlcA-(1-&gt;](n)-4)-beta-D-Xyl-(1-&gt;4)-Rib-ol-P-Rib-ol-P-3-beta-D-GalNAc-(1-&gt;3)-beta-D-GlcNAc-(1-&gt;4)-O-6-P-alpha-D-Man}-L-Thr-[protein] + UDP-alpha-D-xylose = 3-O-{(1-&gt;[3)-alpha-D-Xyl-(1-&gt;3)-beta-D-GlcA-(1-&gt;](n+1)-4)-beta-D-Xyl-(1-&gt;4)-Rib-ol-P-Rib-ol-P-3-beta-D-GalNAc-(1-&gt;3)-beta-D-GlcNAc-(1-&gt;4)-O-6-P-alpha-D-Man}-L-Thr-[protein] + UDP + H(+). The protein operates within protein modification; protein glycosylation. Its function is as follows. Bifunctional glycosyltransferase with both alpha-1,3-xylosyltransferase and beta-1,3-glucuronyltransferase activities involved in the maturation of alpha-dystroglycan (DAG1) by glycosylation leading to DAG1 binding to laminin G-like domain-containing extracellular proteins with high affinity and in a phosphorylated-O-mannosyl trisaccharide dependent manner. Elongates the glucuronyl-beta-1,4-xylose-beta disaccharide primer structure by adding repeating units [-3-Xylose-alpha-1,3-GlcA-beta-1-] to produce a heteropolysaccharide. Supports the maturation of DAG1 more effectively than LARGE1. In addition, can modify both heparan sulfate (HS)- and chondroitin/dermatan sulfate (CS/DS)-proteoglycans (PGs), namely GPC4, with a glycosaminoglycan (GAG)-like polysaccharide composed of xylose and glucuronic acid to confer laminin binding. This Homo sapiens (Human) protein is Xylosyl- and glucuronyltransferase LARGE2.